The primary structure comprises 286 residues: Pantothenate synthetase (286 aa).

30 to 37 (MGNLHSGH) is an ATP binding site. His-37 (proton donor) is an active-site residue. Residue Gln-61 coordinates (R)-pantoate. Gln-61 contributes to the beta-alanine binding site. 149-152 (GQKD) is an ATP binding site. Residue Gln-155 participates in (R)-pantoate binding. ATP is bound by residues Val-178 and 186 to 189 (LSSR).

This sequence belongs to the pantothenate synthetase family. As to quaternary structure, homodimer.

It is found in the cytoplasm. It carries out the reaction (R)-pantoate + beta-alanine + ATP = (R)-pantothenate + AMP + diphosphate + H(+). Its pathway is cofactor biosynthesis; (R)-pantothenate biosynthesis; (R)-pantothenate from (R)-pantoate and beta-alanine: step 1/1. In terms of biological role, catalyzes the condensation of pantoate with beta-alanine in an ATP-dependent reaction via a pantoyl-adenylate intermediate. This is Pantothenate synthetase from Pseudomonas fluorescens (strain Pf0-1).